Reading from the N-terminus, the 291-residue chain is Elongation factor Ts (291 aa).

Residues 80–83 (TDFV) form an involved in Mg(2+) ion dislocation from EF-Tu region.

It belongs to the EF-Ts family.

The protein localises to the cytoplasm. Functionally, associates with the EF-Tu.GDP complex and induces the exchange of GDP to GTP. It remains bound to the aminoacyl-tRNA.EF-Tu.GTP complex up to the GTP hydrolysis stage on the ribosome. In Ligilactobacillus salivarius (strain UCC118) (Lactobacillus salivarius), this protein is Elongation factor Ts.